A 383-amino-acid polypeptide reads, in one-letter code: Putative protein FAM157A (383 aa).

Disordered regions lie at residues 1–21 (MGPL…PLPK) and 177–254 (ATAR…PLGR).

This sequence belongs to the FAM157 family.

This Homo sapiens (Human) protein is Putative protein FAM157A (FAM157A).